The primary structure comprises 223 residues: Ribonuclease T (223 aa).

Positions 20-194 constitute an Exonuclease domain; the sequence is VVIDVETAGF…YDTERTAELF (175 aa). Mg(2+) contacts are provided by D23, E25, H181, and D186. H181 acts as the Proton donor/acceptor in catalysis.

The protein belongs to the RNase T family. As to quaternary structure, homodimer. Requires Mg(2+) as cofactor.

In terms of biological role, trims short 3' overhangs of a variety of RNA species, leaving a one or two nucleotide 3' overhang. Responsible for the end-turnover of tRNA: specifically removes the terminal AMP residue from uncharged tRNA (tRNA-C-C-A). Also appears to be involved in tRNA biosynthesis. This is Ribonuclease T from Shewanella baltica (strain OS185).